Reading from the N-terminus, the 506-residue chain is Maturase K (506 aa).

It belongs to the intron maturase 2 family. MatK subfamily.

The protein localises to the plastid. The protein resides in the chloroplast. Usually encoded in the trnK tRNA gene intron. Probably assists in splicing its own and other chloroplast group II introns. This is Maturase K from Pisum sativum (Garden pea).